A 150-amino-acid polypeptide reads, in one-letter code: Ribonuclease HI (150 aa).

In terms of domain architecture, RNase H type-1 spans 1–141 (MKSINAYTDG…VDVLARGQAM (141 aa)). D9, E47, D69, and D133 together coordinate Mg(2+).

The protein belongs to the RNase H family. Monomer. The cofactor is Mg(2+).

It localises to the cytoplasm. It carries out the reaction Endonucleolytic cleavage to 5'-phosphomonoester.. Endonuclease that specifically degrades the RNA of RNA-DNA hybrids. The chain is Ribonuclease HI from Xylella fastidiosa (strain 9a5c).